Consider the following 299-residue polypeptide: RING-H2 finger protein ATL20 (299 aa).

Residues 172–192 (LIITLCIIGGITATCIAAIRI) form a helical membrane-spanning segment. Residues 253 to 295 (CPICLSEYASKETVRCMPECDHCFHVQCIDEWLKIHSSCPVCR) form an RING-type; atypical zinc finger.

This sequence belongs to the RING-type zinc finger family. ATL subfamily.

Its subcellular location is the membrane. It catalyses the reaction S-ubiquitinyl-[E2 ubiquitin-conjugating enzyme]-L-cysteine + [acceptor protein]-L-lysine = [E2 ubiquitin-conjugating enzyme]-L-cysteine + N(6)-ubiquitinyl-[acceptor protein]-L-lysine.. It participates in protein modification; protein ubiquitination. The chain is RING-H2 finger protein ATL20 (ATL20) from Arabidopsis thaliana (Mouse-ear cress).